A 106-amino-acid chain; its full sequence is Serine rich endogenous peptide 7 (106 aa).

Residues 1–26 (MGKKCSSKFRQMLVLVLLLIVFTCLS) form the signal peptide. Basic and acidic residues-rich tracts occupy residues 46-56 (GIEDEGQERTH) and 65-77 (RSVE…EGRR). Residues 46 to 106 (GIEDEGQERT…GGGRIPVAAS (61 aa)) form a disordered region. 2 consecutive short sequence motifs (SCOOP motif) follow at residues 58 to 72 (LNSK…KTHH) and 86 to 100 (GIRA…GGGR). 2 consecutive short sequence motifs (sxS motif essential for MIK2 binding) follow at residues 64–66 (SRS) and 92–94 (SKS).

This sequence belongs to the serine rich endogenous peptide (SCOOP) phytocytokine family. Interacts with MIK2 (via extracellular leucine-rich repeat domain); this interaction triggers the formation of complex between MIK2 and the BAK1/SERK3 and SERK4 coreceptors, and subsequent BAK1 activation by phosphorylation. As to expression, mostly expressed in roots, and, to a lower extent, in seedlings shoots.

It localises to the cell membrane. It is found in the secreted. The protein resides in the extracellular space. The protein localises to the apoplast. In terms of biological role, brassicaceae-specific phytocytokine (plant endogenous peptide released into the apoplast) perceived by MIK2 in a BAK1/SERK3 and SERK4 coreceptors-dependent manner, that modulates various physiological and antimicrobial processes including growth prevention and reactive oxygen species (ROS) response regulation. The polypeptide is Serine rich endogenous peptide 7 (Arabidopsis thaliana (Mouse-ear cress)).